The chain runs to 187 residues: Peptide deformylase (187 aa).

Residues Cys-107 and His-149 each coordinate Fe cation. Residue Glu-150 is part of the active site. Residue His-153 coordinates Fe cation.

The protein belongs to the polypeptide deformylase family. Fe(2+) is required as a cofactor.

It carries out the reaction N-terminal N-formyl-L-methionyl-[peptide] + H2O = N-terminal L-methionyl-[peptide] + formate. Functionally, removes the formyl group from the N-terminal Met of newly synthesized proteins. Requires at least a dipeptide for an efficient rate of reaction. N-terminal L-methionine is a prerequisite for activity but the enzyme has broad specificity at other positions. The chain is Peptide deformylase from Synechocystis sp. (strain ATCC 27184 / PCC 6803 / Kazusa).